Here is a 1250-residue protein sequence, read N- to C-terminus: Protein suppressor of variegation 3-7 (1250 aa).

Disordered regions lie at residues 107 to 148 (LNNP…HSYH) and 160 to 186 (HDPG…GGMR). The segment covering 132–141 (STKTEPSSDA) has biased composition (polar residues). Residues 164 to 175 (DSQDDDDEDDES) are compositionally biased toward acidic residues. 3 positions are modified to phosphoserine: Ser-165, Ser-175, and Ser-176. 4 consecutive C2H2-type zinc fingers follow at residues 217-236 (CLYC…IQQH), 319-343 (CRIC…TKGH), 425-446 (CTLC…TRAH), and 487-512 (CSVC…SEKH). A compositionally biased stretch (basic and acidic residues) spans 343-354 (HMEALRNLDSDK). Residues 343–398 (HMEALRNLDSDKRSRKRKRSKSNSVTNSGGDEAEREKESEPEVGPEDAQDTPVVMM) form a disordered region. Residues 525–564 (VGSADGRGGDNMDEEEAAASDQAQSSQTDDSEDNDDDNWS) form a disordered region. A compositionally biased stretch (low complexity) spans 543–552 (ASDQAQSSQT). A compositionally biased stretch (acidic residues) spans 553 to 563 (DDSEDNDDDNW). The C2H2-type 5 zinc-finger motif lies at 605–629 (QICKFCRVRFHNEAAKARHELSARH). The disordered stretch occupies residues 642-684 (KLHQGTNTQTKHNAQDDEESQEQDEEYGEEEEDAEEDSQSNFD). Acidic residues predominate over residues 657-679 (DDEESQEQDEEYGEEEEDAEEDS). 2 C2H2-type zinc fingers span residues 737–761 (CKLC…TSRH) and 829–852 (CRVC…SRKH). Positions 851–860 (KHVENKERQR) are enriched in basic and acidic residues. Positions 851 to 915 (KHVENKERQR…PLAKRSRRSM (65 aa)) are disordered. Phosphoserine occurs at positions 871 and 873. A compositionally biased stretch (basic and acidic residues) spans 879–897 (DAERQESGMDKESENDMSV). Phosphoserine is present on Ser-975. A BESS domain is found at 987 to 1026 (RHVMDLFFDSISPTMKSLPPDLAAEGKSKIMQLVCSLELR). Residues 1032–1055 (ATTPTPATVSASSKWPSSTTVTPV) are compositionally biased toward low complexity. Disordered stretches follow at residues 1032-1060 (ATTP…TPPA), 1079-1116 (TTPH…NGSA), 1154-1180 (QSRT…ADLS), and 1205-1236 (NTPQ…NGCQ). 2 stretches are compositionally biased toward polar residues: residues 1079-1091 (TTPH…QNNN) and 1104-1114 (GASSAQVTING). Over residues 1206–1224 (TPQMQQPQQAQASITSSTP) the composition is skewed to low complexity.

In terms of assembly, interacts with Su(var)39 through the BESS domain.

It is found in the nucleus. Functionally, dose-limiting factor in position-effect variegation, the inactivation in some cells of a gene translocated next to heterochromatin. It could play a role in chromosome condensation. The chain is Protein suppressor of variegation 3-7 (Su(var)3-7) from Drosophila melanogaster (Fruit fly).